Reading from the N-terminus, the 230-residue chain is Somatolactin (230 aa).

A signal peptide spans 1-23 (MIKTKVLQAWMGIWLCAVNGLLG). Intrachain disulfides connect Cys-28–Cys-38, Cys-87–Cys-202, and Cys-219–Cys-227. An N-linked (GlcNAc...) asparagine glycan is attached at Asn-177.

It belongs to the somatotropin/prolactin family.

Its subcellular location is the secreted. This chain is Somatolactin, found in Ictalurus punctatus (Channel catfish).